We begin with the raw amino-acid sequence, 207 residues long: Granulocyte colony-stimulating factor (207 aa).

Positions 1-30 (MAGPATQSPMKLMALQLLLWHSALWTVQEA) are cleaved as a signal peptide. 2 disulfide bridges follow: cysteine 69/cysteine 75 and cysteine 97/cysteine 107. The O-linked (GalNAc...) threonine glycan is linked to threonine 166.

Belongs to the IL-6 superfamily. In terms of assembly, monomer. O-glycan consists of Gal-GalNAc disaccharide which can be modified with up to two sialic acid residues (done in recombinantly expressed G-CSF from CHO cells).

It localises to the secreted. Its function is as follows. Granulocyte/macrophage colony-stimulating factors are cytokines that act in hematopoiesis by controlling the production, differentiation, and function of 2 related white cell populations of the blood, the granulocytes and the monocytes-macrophages. This CSF induces granulocytes. The sequence is that of Granulocyte colony-stimulating factor (CSF3) from Homo sapiens (Human).